We begin with the raw amino-acid sequence, 404 residues long: Cysteine desulfurase IscS (404 aa).

Pyridoxal 5'-phosphate contacts are provided by residues A75–T76, N155, Q183, and S203–H205. The residue at position 206 (K206) is an N6-(pyridoxal phosphate)lysine. Residue T243 participates in pyridoxal 5'-phosphate binding. The active-site Cysteine persulfide intermediate is the C328. Position 328 (C328) interacts with [2Fe-2S] cluster.

The protein belongs to the class-V pyridoxal-phosphate-dependent aminotransferase family. NifS/IscS subfamily. As to quaternary structure, homodimer. Forms a heterotetramer with IscU, interacts with other sulfur acceptors. The cofactor is pyridoxal 5'-phosphate.

It is found in the cytoplasm. The catalysed reaction is (sulfur carrier)-H + L-cysteine = (sulfur carrier)-SH + L-alanine. It functions in the pathway cofactor biosynthesis; iron-sulfur cluster biosynthesis. Functionally, master enzyme that delivers sulfur to a number of partners involved in Fe-S cluster assembly, tRNA modification or cofactor biosynthesis. Catalyzes the removal of elemental sulfur atoms from cysteine to produce alanine. Functions as a sulfur delivery protein for Fe-S cluster synthesis onto IscU, an Fe-S scaffold assembly protein, as well as other S acceptor proteins. The polypeptide is Cysteine desulfurase IscS (Shewanella frigidimarina (strain NCIMB 400)).